The following is a 225-amino-acid chain: Ribosomal RNA small subunit methyltransferase G (225 aa).

Residues glycine 69, 119–120, and arginine 136 contribute to the S-adenosyl-L-methionine site; that span reads AE.

It belongs to the methyltransferase superfamily. RNA methyltransferase RsmG family.

The protein resides in the cytoplasm. Specifically methylates the N7 position of a guanine in 16S rRNA. The sequence is that of Ribosomal RNA small subunit methyltransferase G from Pseudothermotoga lettingae (strain ATCC BAA-301 / DSM 14385 / NBRC 107922 / TMO) (Thermotoga lettingae).